A 344-amino-acid polypeptide reads, in one-letter code: GTP 3',8-cyclase (344 aa).

The Radical SAM core domain occupies 19–239; the sequence is PFGRTIDYLR…ANYTLTDLPD (221 aa). Residue arginine 28 participates in GTP binding. The [4Fe-4S] cluster site is built by cysteine 35 and cysteine 39. Tyrosine 41 serves as a coordination point for S-adenosyl-L-methionine. Cysteine 42 is a [4Fe-4S] cluster binding site. Arginine 77 contributes to the GTP binding site. Glycine 81 serves as a coordination point for S-adenosyl-L-methionine. Threonine 111 serves as a coordination point for GTP. S-adenosyl-L-methionine is bound at residue serine 135. Residue lysine 171 coordinates GTP. Methionine 205 contributes to the S-adenosyl-L-methionine binding site. [4Fe-4S] cluster-binding residues include cysteine 268 and cysteine 271. 273 to 275 is a binding site for GTP; the sequence is RVR. Position 285 (cysteine 285) interacts with [4Fe-4S] cluster.

The protein belongs to the radical SAM superfamily. MoaA family. Monomer and homodimer. [4Fe-4S] cluster serves as cofactor.

The enzyme catalyses GTP + AH2 + S-adenosyl-L-methionine = (8S)-3',8-cyclo-7,8-dihydroguanosine 5'-triphosphate + 5'-deoxyadenosine + L-methionine + A + H(+). It participates in cofactor biosynthesis; molybdopterin biosynthesis. Functionally, catalyzes the cyclization of GTP to (8S)-3',8-cyclo-7,8-dihydroguanosine 5'-triphosphate. The chain is GTP 3',8-cyclase from Rhodopseudomonas palustris (strain ATCC BAA-98 / CGA009).